Consider the following 656-residue polypeptide: Methylenetetrahydrofolate reductase (NADPH) (656 aa).

Residues 1 to 12 are compositionally biased toward polar residues; it reads MVNEARGNSSLN. A disordered region spans residues 1–44; that stretch reads MVNEARGNSSLNPCLEGSASSGSESSKDSSRCSTPGLDPERHER. Phosphoserine is present on residues Ser9, Ser10, Ser18, Ser20, Ser21, Ser23, Ser25, Ser26, Ser29, and Ser30. Thr34 carries the post-translational modification Phosphothreonine. The Proton donor/acceptor role is filled by Glu63. Residue 63-68 coordinates NAD(+); the sequence is EFFPPR. Tyr90 is subject to Phosphotyrosine. The residue at position 94 (Thr94) is a Phosphothreonine. 94-95 contributes to the NAD(+) binding site; sequence TW. Residue 94–95 coordinates FAD; that stretch reads TW. Ser103 carries the post-translational modification Phosphoserine. FAD contacts are provided by residues His127, 157-159, 174-175, Tyr197, 201-204, Asp210, and Lys217; these read RGD, YA, and HPEA. Position 159 (Asp159) interacts with substrate. Positions 228, 321, and 325 each coordinate substrate. The residue at position 394 (Ser394) is a Phosphoserine. Thr451 bears the Phosphothreonine mark. Residues Asn456, 461 to 464, 481 to 485, Thr560, and Thr573 contribute to the S-adenosyl-L-methionine site; these read AAET and TINSQ.

Belongs to the methylenetetrahydrofolate reductase family. In terms of assembly, homodimer. FAD is required as a cofactor. Post-translationally, phosphorylation of an N-terminal serine-rich phosphorylation region increases sensitivity to S-adenosylmethionine and inhibition.

The enzyme catalyses (6S)-5-methyl-5,6,7,8-tetrahydrofolate + NADP(+) = (6R)-5,10-methylene-5,6,7,8-tetrahydrofolate + NADPH + H(+). It participates in one-carbon metabolism; tetrahydrofolate interconversion. Allosterically regulated by S-adenosylmethionine (SAM). Catalyzes the conversion of 5,10-methylenetetrahydrofolate to 5-methyltetrahydrofolate, a cosubstrate for homocysteine remethylation to methionine. Represents a key regulatory connection between the folate and methionine cycles. The chain is Methylenetetrahydrofolate reductase (NADPH) from Homo sapiens (Human).